A 378-amino-acid chain; its full sequence is Chaperone protein DnaJ (378 aa).

Residues 3-67 (DYYDLLGVSK…QTRGRYDQFG (65 aa)) enclose the J domain. Residues 133 to 215 (GQEREIKIPH…CAGQGVRQVR (83 aa)) form a CR-type zinc finger. Cysteine 146, cysteine 149, cysteine 163, cysteine 166, cysteine 189, cysteine 192, cysteine 203, and cysteine 206 together coordinate Zn(2+). CXXCXGXG motif repeat units lie at residues 146–153 (CDTCNGTG), 163–170 (CSTCGGVG), 189–196 (CPSCEGTG), and 203–210 (CPACAGQG).

The protein belongs to the DnaJ family. As to quaternary structure, homodimer. Requires Zn(2+) as cofactor.

Its subcellular location is the cytoplasm. Its function is as follows. Participates actively in the response to hyperosmotic and heat shock by preventing the aggregation of stress-denatured proteins and by disaggregating proteins, also in an autonomous, DnaK-independent fashion. Unfolded proteins bind initially to DnaJ; upon interaction with the DnaJ-bound protein, DnaK hydrolyzes its bound ATP, resulting in the formation of a stable complex. GrpE releases ADP from DnaK; ATP binding to DnaK triggers the release of the substrate protein, thus completing the reaction cycle. Several rounds of ATP-dependent interactions between DnaJ, DnaK and GrpE are required for fully efficient folding. Also involved, together with DnaK and GrpE, in the DNA replication of plasmids through activation of initiation proteins. The chain is Chaperone protein DnaJ from Prochlorococcus marinus (strain MIT 9313).